The chain runs to 2524 residues: Highly reducing polyketide synthase Preu5 (2524 aa).

One can recognise a Ketosynthase family 3 (KS3) domain in the interval 5 to 426 (DTPIAIIGLS…GSNSAIVIEK (422 aa)). Catalysis depends on for beta-ketoacyl synthase activity residues C175, H310, and H350. The interval 431 to 470 (DELGHETNGTNGVSVSNGVNGSNGFTNGSNGTNGHAENGN) is disordered. The span at 437–464 (TNGTNGVSVSNGVNGSNGFTNGSNGTNG) shows a compositional bias: low complexity. Positions 559–882 (VFTGQGAQYA…TYLPSLVRNV (324 aa)) are malonyl-CoA:ACP transacylase (MAT) domain. The For malonyltransferase activity role is filled by S648. Residues 950 to 1084 (HELLGRRVVS…GQIEPEFADM (135 aa)) are N-terminal hotdog fold. In terms of domain architecture, PKS/mFAS DH spans 950-1264 (HELLGRRVVS…FRNIGSADEN (315 aa)). A dehydratase (DH) domain region spans residues 950–1266 (HELLGRRVVS…NIGSADENID (317 aa)). H982 functions as the Proton acceptor; for dehydratase activity in the catalytic mechanism. The tract at residues 1102-1264 (ADLLEHDIEG…FRNIGSADEN (163 aa)) is C-terminal hotdog fold. The Proton donor; for dehydratase activity role is filled by D1171. The tract at residues 1418–1611 (SQAVGDLADN…IPGVWDSEVQ (194 aa)) is methyltransferase (CMet) domain. The interval 1825–2139 (GSPDSIYFRR…SGDHLGKIVV (315 aa)) is enoylreductase (ER) domain. A ketoreductase (KR) domain region spans residues 2164-2339 (GTYLVTGGTR…HTVSIALPIV (176 aa)). In terms of domain architecture, Carrier spans 2445-2522 (DPLEGLTEAL…ALATDILSQR (78 aa)). S2482 carries the O-(pantetheine 4'-phosphoryl)serine modification.

The cofactor is pantetheine 4'-phosphate.

Its function is as follows. Highly reducing polyketide synthase; part of a gene cluster that mediates the biosynthesis of a yet unidentified natural product. The protein is Highly reducing polyketide synthase Preu5 of Preussia isomera (Coprophilous fungus).